The following is a 339-amino-acid chain: Probable G-protein coupled receptor 33 (339 aa).

The Extracellular portion of the chain corresponds to 1 to 30; the sequence is MDRVNSSGHVISVSPSLTNSTGVPTPAPKA. N-linked (GlcNAc...) asparagine glycosylation is found at Asn5 and Asn19. A helical transmembrane segment spans residues 31–53; it reads IIAAALFMSFIVGTISNGLYLWM. Residues 54-64 are Cytoplasmic-facing; it reads LKFKMQRTVNT. Residues 65-86 form a helical membrane-spanning segment; sequence LLFFHLILSYFISTLILPFMAT. The Extracellular portion of the chain corresponds to 87–103; sequence SFLQDNHWAFGSVLCKV. A disulfide bond links Cys101 and Cys179. A helical transmembrane segment spans residues 104–124; it reads FNSTLSVSMFASVFFLSAISV. At 125–143 the chain is on the cytoplasmic side; that stretch reads DRYHLTLHPVWSQQHRTPR. The chain crosses the membrane as a helical span at residues 144-165; it reads WASRIALRIWILATILSIPYLV. Topologically, residues 166–209 are extracellular; sequence FRETHDDHKGRIKCQNNYIVGTNWESSEHQTLGQWIHAACFGRR. Residues 210 to 230 form a helical membrane-spanning segment; the sequence is FLLGFLLPFLVIVFCYKRVAT. Topologically, residues 231–246 are cytoplasmic; sequence KMKDKGLFKSSKPFKV. Residues 247 to 268 traverse the membrane as a helical segment; it reads MLTAVVSFFVCWMPYHVHSGLV. At 269–283 the chain is on the extracellular side; sequence LTKSQPLPSQLTLGL. Residues 284–303 form a helical membrane-spanning segment; that stretch reads AVVTISFNTVVSPILYLFTG. The Cytoplasmic segment spans residues 304–339; that stretch reads ENFEVFKKSILALFKSTFSDSSATERTQTLNSETEI.

Belongs to the G-protein coupled receptor 1 family.

The protein localises to the cell membrane. In terms of biological role, orphan receptor; could be a chemoattractant receptor. This chain is Probable G-protein coupled receptor 33 (Gpr33), found in Rattus rattus (Black rat).